The primary structure comprises 238 residues: Thrombin-like enzyme AhV_TL-I (238 aa).

Residues 1 to 229 (IIGGDECNIN…HLDWIENIIA (229 aa)) form the Peptidase S1 domain. Intrachain disulfides connect cysteine 7-cysteine 141, cysteine 28-cysteine 44, cysteine 76-cysteine 236, cysteine 120-cysteine 190, cysteine 152-cysteine 169, and cysteine 180-cysteine 205. Histidine 43 functions as the Charge relay system in the catalytic mechanism. The N-linked (GlcNAc...) asparagine glycan is linked to asparagine 81. Aspartate 88 serves as the catalytic Charge relay system. Serine 184 (charge relay system) is an active-site residue.

The protein belongs to the peptidase S1 family. Snake venom subfamily. Monomer. Post-translationally, N-glycosylated at Asn-81 by a disaccharide composed of two N-acetylglucosamine (NAG). The presence of this N-glycan deforms the enzyme and Removing the carbohydrate moiety increases the esterase activity, but induces a complete loss of contractile response on mouse thoracic aorta. As to expression, expressed by the venom gland.

Its subcellular location is the secreted. With respect to regulation, inhibited by PMSF, L-cysteine and partially by SBTI and leupeptin. Functionally, thrombin-like enzyme that shows fibrinogenolytic activity against both the Aalpha (FGA) and Bbeta (FGB) chains of bovine fibrinogen. This enzyme has poor esterolytic activity upon BAEE substrate. It induces mouse thoracic aortic ring contraction with EC(50)=147 nmol/L. It shows vasoconstrictor effects that are independent of the enzymatic activity, but related to the release of calcium ions form the calcium store, potentially through the activation of ryanodine receptors. This Gloydius halys (Chinese water mocassin) protein is Thrombin-like enzyme AhV_TL-I.